A 430-amino-acid polypeptide reads, in one-letter code: Transcriptional regulatory protein RXT2 (430 aa).

The interval 408-430 (EIENTMEDGVVDDNEPDEEANRA) is disordered.

Belongs to the RXT2 family. Component of the RPD3C(L) complex composed of at least ASH1, CTI6, DEP1, PHO23, RPD3, RXT2, RXT3, SAP30, SDS3, SIN3, UME1 and UME6.

It localises to the nucleus. In terms of biological role, component of the RPD3C(L) histone deacetylase complex (HDAC) responsible for the deacetylation of lysine residues on the N-terminal part of the core histones (H2A, H2B, H3 and H4). Histone deacetylation gives a tag for epigenetic repression and plays an important role in transcriptional regulation, cell cycle progression and developmental events. This Saccharomyces cerevisiae (strain ATCC 204508 / S288c) (Baker's yeast) protein is Transcriptional regulatory protein RXT2 (RXT2).